The primary structure comprises 241 residues: Pyridoxal phosphate phosphatase PHOSPHO2 (241 aa).

The active-site Nucleophile is the aspartate 8. Mg(2+) is bound by residues aspartate 8 and aspartate 10. Residue aspartate 10 is the Proton donor of the active site. Substrate contacts are provided by aspartate 19 and aspartate 99. Aspartate 179 is a Mg(2+) binding site.

It belongs to the HAD-like hydrolase superfamily. PHOSPHO family. Mg(2+) is required as a cofactor.

It catalyses the reaction pyridoxal 5'-phosphate + H2O = pyridoxal + phosphate. Functionally, phosphatase that has high activity toward pyridoxal 5'-phosphate (PLP). Also active at much lower level toward pyrophosphate, phosphoethanolamine (PEA), phosphocholine (PCho), phospho-l-tyrosine, fructose-6-phosphate, p-nitrophenyl phosphate, and h-glycerophosphate. This is Pyridoxal phosphate phosphatase PHOSPHO2 (PHOSPHO2) from Homo sapiens (Human).